Consider the following 298-residue polypeptide: Thymidylate synthase (298 aa).

DUMP-binding positions include R25 and 159 to 160 (RR). C179 serves as the catalytic Nucleophile. Residues 200–203 (RSVD), N211, and 241–243 (HLY) contribute to the dUMP site. (6R)-5,10-methylene-5,6,7,8-tetrahydrofolate is bound at residue D203. A297 is a binding site for (6R)-5,10-methylene-5,6,7,8-tetrahydrofolate.

This sequence belongs to the thymidylate synthase family. Bacterial-type ThyA subfamily. Homodimer.

The protein resides in the cytoplasm. The enzyme catalyses dUMP + (6R)-5,10-methylene-5,6,7,8-tetrahydrofolate = 7,8-dihydrofolate + dTMP. Its pathway is pyrimidine metabolism; dTTP biosynthesis. Functionally, catalyzes the reductive methylation of 2'-deoxyuridine-5'-monophosphate (dUMP) to 2'-deoxythymidine-5'-monophosphate (dTMP) while utilizing 5,10-methylenetetrahydrofolate (mTHF) as the methyl donor and reductant in the reaction, yielding dihydrofolate (DHF) as a by-product. This enzymatic reaction provides an intracellular de novo source of dTMP, an essential precursor for DNA biosynthesis. The sequence is that of Thymidylate synthase from Cereibacter sphaeroides (strain ATCC 17023 / DSM 158 / JCM 6121 / CCUG 31486 / LMG 2827 / NBRC 12203 / NCIMB 8253 / ATH 2.4.1.) (Rhodobacter sphaeroides).